Here is a 136-residue protein sequence, read N- to C-terminus: Large ribosomal subunit protein uL16 (136 aa).

This sequence belongs to the universal ribosomal protein uL16 family. Part of the 50S ribosomal subunit.

Functionally, binds 23S rRNA and is also seen to make contacts with the A and possibly P site tRNAs. The chain is Large ribosomal subunit protein uL16 from Vesicomyosocius okutanii subsp. Calyptogena okutanii (strain HA).